We begin with the raw amino-acid sequence, 627 residues long: Phosphomethylpyrimidine synthase (627 aa).

Over residues 1–24 the composition is skewed to polar residues; it reads MSATQKNNITRLEQLDRQSTQPFP. Residues 1-29 form a disordered region; sequence MSATQKNNITRLEQLDRQSTQPFPNSRKV. Substrate contacts are provided by residues N231, M260, Y289, H325, 345–347, 386–389, and E425; these read SRG and DGLR. H429 is a binding site for Zn(2+). Y452 provides a ligand contact to substrate. H493 contributes to the Zn(2+) binding site. [4Fe-4S] cluster contacts are provided by C573, C576, and C581.

The protein belongs to the ThiC family. Homodimer. Requires [4Fe-4S] cluster as cofactor.

It carries out the reaction 5-amino-1-(5-phospho-beta-D-ribosyl)imidazole + S-adenosyl-L-methionine = 4-amino-2-methyl-5-(phosphooxymethyl)pyrimidine + CO + 5'-deoxyadenosine + formate + L-methionine + 3 H(+). Its pathway is cofactor biosynthesis; thiamine diphosphate biosynthesis. In terms of biological role, catalyzes the synthesis of the hydroxymethylpyrimidine phosphate (HMP-P) moiety of thiamine from aminoimidazole ribotide (AIR) in a radical S-adenosyl-L-methionine (SAM)-dependent reaction. In Pseudomonas aeruginosa (strain LESB58), this protein is Phosphomethylpyrimidine synthase.